An 88-amino-acid chain; its full sequence is Small ribosomal subunit protein uS19 (88 aa).

Belongs to the universal ribosomal protein uS19 family.

Its function is as follows. Protein S19 forms a complex with S13 that binds strongly to the 16S ribosomal RNA. The polypeptide is Small ribosomal subunit protein uS19 (rpsS) (Chlamydia pneumoniae (Chlamydophila pneumoniae)).